A 473-amino-acid polypeptide reads, in one-letter code: MNIKKFAKQATVLTFTTALLAGGATQAFAKETNQKPYKETYGISHITRHDMLQIPEQQKNEKYQVPEFDSSTIKNISSAKGLDVWDSWPLQNADGTVANYHGYHIVFALAGDPKNADDTSIYMFYQKVGETSIDSWKTPGRVFKDSDKFDANDSILKDQTQEWSGSATFTSDGKIRLFYTDFSGKHYGKQTLTTAQVNVSASDSSLNINGVEDYKSIFDGDSKTYQNVQQFIDEGNYSSGDNHTLRDPHYVEDKGHKYLVFEANTGTEDGYQGEESLFNKAYYGKSTSFFRQESQKLLQSDKNRTAELANGALGMIELNDDYTLKKVMKPLIASNTVTDEIERANVFKMNGKWYLSTDSRGSQMTIDGITSNDIYMLGYVSNSLTGPYKPLNKTGLVLKMDLDPNDVTFTYSHFAVPQATGNNVVITSYMTNRGFYADKQSTFAPSFLLNIQGKKTSVVKASILDQGQLTVNQ.

An N-terminal signal peptide occupies residues Met1–Ala29.

Belongs to the glycosyl hydrolase 68 family.

It localises to the secreted. The chain is Inactive levansucrase (sacB) from Geobacillus stearothermophilus (Bacillus stearothermophilus).